The primary structure comprises 132 residues: MKFSGLFPFLLLALGTLALWAVEGAENEALKAGACPPRKSAQCFGNEKPRCSSDWQCPHKKKCCLDTCGTECLDPVNITNPVKKKPGTCPVIHGQCLMLKPLNHCETDDQCIGALKCCKAMCGKVCLSPVKA.

The first 24 residues, 1–24 (MKFSGLFPFLLLALGTLALWAVEG), serve as a signal peptide directing secretion. A WAP 1 domain is found at 28–76 (EALKAGACPPRKSAQCFGNEKPRCSSDWQCPHKKKCCLDTCGTECLDPV). Intrachain disulfides connect Cys35–Cys64, Cys43–Cys68, Cys51–Cys63, and Cys57–Cys72. An N-linked (GlcNAc...) asparagine glycan is attached at Asn77. Positions 82–130 (VKKKPGTCPVIHGQCLMLKPLNHCETDDQCIGALKCCKAMCGKVCLSPV) constitute a WAP 2 domain. Intrachain disulfides connect Cys89-Cys118, Cys96-Cys122, Cys105-Cys117, and Cys111-Cys126.

Interacts with GRN; interaction protects progranulin from proteolysis. Detected in bronchoalveolar fluid (at protein level). Detected in large and small intestine, trachea, skin, lung and tongue.

The protein localises to the secreted. Functionally, acid-stable proteinase inhibitor with strong affinities for trypsin, chymotrypsin, elastase, and cathepsin G. Modulates the inflammatory and immune responses after bacterial infection, and after infection by the intracellular parasite L.major. Down-regulates responses to bacterial lipopolysaccharide (LPS). Plays a role in regulating the activation of NF-kappa-B and inflammatory responses. Has antimicrobial activity against mycobacteria, but not against salmonella. Contributes to normal resistance against infection by M.tuberculosis. Required for normal resistance to infection by L.major. Required for normal wound healing, probably by preventing tissue damage by limiting protease activity. Together with ELANE, required for normal differentiation and proliferation of bone marrow myeloid cells. This chain is Antileukoproteinase (SLPI), found in Ovis aries (Sheep).